Consider the following 226-residue polypeptide: Translation initiation factor 6 (226 aa).

This sequence belongs to the eIF-6 family.

In terms of biological role, binds to the 50S ribosomal subunit and prevents its association with the 30S ribosomal subunit to form the 70S initiation complex. The sequence is that of Translation initiation factor 6 from Haloquadratum walsbyi (strain DSM 16790 / HBSQ001).